The sequence spans 1176 residues: Myosin light chain kinase, smooth muscle (1176 aa).

The segment at 1-41 (MDFRANLQRQVKPKTLSEEERKVHGPQQVDFRSVLAKKGTP) is actin-binding (calcium/calmodulin-sensitive). Residues 1–354 (MDFRANLQRQ…SEKRPESRGT (354 aa)) are disordered. The tract at residues 26–41 (PQQVDFRSVLAKKGTP) is calmodulin-binding. Positions 43-55 (TPVPEKVPPPKPA) are enriched in pro residues. 16 tandem repeats follow at residues 100–111 (FLKPVGNAKLAD), 112–123 (TPKPLSSTKPAE), 124–135 (TPKPLGNVKPAE), 136–147 (TPKPLGSTKPAE), 148–159 (TPKPLGSTKPAE), 160–171 (TPKPLGNVKPAE), 172–183 (TPKPLGNIKPTE), 184–195 (TPKPLGSTKPAE), 196–207 (TPKPLGSTKPAE), 208–219 (TPKPLGNVKPAE), 220–231 (TPKPLGNVKPAE), 232–243 (TPKPLGNVKPAE), 244–255 (TPKPVSNAKPAE), 256–267 (TLKPVGNAKPAE), 268–279 (TPKPLSNVKPAE), and 280–291 (TPKLVGNAKPAE). The segment at 100 to 291 (FLKPVGNAKL…KLVGNAKPAE (192 aa)) is 16 X 12 AA tandem repeats. Position 202 is a phosphoserine (serine 202). Residues 319-721 (PTGKEELKKE…TVTVNTEQKV (403 aa)) form an actin-binding (calcium/calmodulin-insensitive) region. Positions 320 to 335 (TGKEELKKEIKNDVNC) are enriched in basic and acidic residues. The 89-residue stretch at 356–444 (PTFEEKLQDL…GQAESSCQVT (89 aa)) folds into the Ig-like C2-type 1 domain. The cysteines at positions 377 and 428 are disulfide-linked. Positions 448–497 (PDAPTSENAKAPEMKARRPKSSLPPVLGTESDATVKKKPAPKTPPKAAMP) are disordered. In terms of domain architecture, Ig-like C2-type 2 spans 498–586 (PQIIQFPEDQ…GSRQAQVNLT (89 aa)). Positions 594–686 (PAGTPCASDI…QESELTALGE (93 aa)) constitute a Fibronectin type-III domain. A disordered region spans residues 673–707 (SEPSQESELTALGEKPEEEPKDEVEVSDDDEKEPE). Over residues 688–706 (PEEEPKDEVEVSDDDEKEP) the composition is skewed to acidic residues. At serine 699 the chain carries Phosphoserine. At tyrosine 710 the chain carries Phosphotyrosine; by ABL1. Residues 725-980 (YDIEERLGSG…CTQCLQHPWL (256 aa)) form the Protein kinase domain. ATP contacts are provided by residues 731–739 (LGSGKFGQV) and lysine 754. Tyrosine 836 bears the Phosphotyrosine; by ABL1 mark. Aspartate 846 (proton acceptor) is an active-site residue. The residue at position 896 (tyrosine 896) is a Phosphotyrosine; by ABL1. The tract at residues 972–1035 (TQCLQHPWLM…SGLSGRKSST (64 aa)) is calmodulin-binding. 5 positions are modified to phosphoserine: serine 1020, serine 1021, serine 1033, serine 1034, and serine 1037. Threonine 1039 carries the post-translational modification Phosphothreonine. Serine 1040 bears the Phosphoserine mark. Residues 1069–1158 (PYFSKTIRDL…GEATCTAELI (90 aa)) enclose the Ig-like C2-type 3 domain. Cysteine 1090 and cysteine 1142 are disulfide-bonded.

The protein belongs to the protein kinase superfamily. CAMK Ser/Thr protein kinase family. In terms of assembly, all isoforms including Telokin bind calmodulin. Interacts with SVIL. Interacts with CTTN; this interaction is reduced during thrombin-induced endothelial cell (EC) contraction but is promoted by the barrier-protective agonist sphingosine 1-phosphate (S1P) within lamellipodia. A complex made of ABL1, CTTN and MYLK regulates cortical actin-based cytoskeletal rearrangement critical to sphingosine 1-phosphate (S1P)-mediated endothelial cell (EC) barrier enhancement. Binds to NAA10/ARD1 and PTK2B/PYK2. Requires Mg(2+) as cofactor. Ca(2+) serves as cofactor. In terms of processing, the C-terminus is deglutamylated by AGTPBP1/CCP1, AGBL1/CCP4 and AGBL4/CCP6, leading to the formation of Myosin light chain kinase, smooth muscle, deglutamylated form. The consequences of C-terminal deglutamylation are unknown. Post-translationally, can probably be down-regulated by phosphorylation. Tyrosine phosphorylation by ABL1 increases kinase activity, reverses MLCK-mediated inhibition of Arp2/3-mediated actin polymerization, and enhances CTTN-binding. Phosphorylation by SRC promotes CTTN binding.

The protein resides in the cytoplasm. It localises to the cell projection. The protein localises to the lamellipodium. Its subcellular location is the cleavage furrow. It is found in the cytoskeleton. The protein resides in the stress fiber. The enzyme catalyses L-seryl-[myosin light chain] + ATP = O-phospho-L-seryl-[myosin light chain] + ADP + H(+). It catalyses the reaction L-threonyl-[myosin light chain] + ATP = O-phospho-L-threonyl-[myosin light chain] + ADP + H(+). In terms of biological role, calcium/calmodulin-dependent myosin light chain kinase implicated in smooth muscle contraction via phosphorylation of myosin light chains (MLC). Also regulates actin-myosin interaction through a non-kinase activity. Phosphorylates PTK2B/PYK2 and myosin light-chains. Involved in the inflammatory response (e.g. apoptosis, vascular permeability, leukocyte diapedesis), cell motility and morphology, airway hyperreactivity and other activities relevant to asthma. Required for tonic airway smooth muscle contraction that is necessary for physiological and asthmatic airway resistance. Necessary for gastrointestinal motility. Implicated in the regulation of endothelial as well as vascular permeability, probably via the regulation of cytoskeletal rearrangements. In the nervous system it has been shown to control the growth initiation of astrocytic processes in culture and to participate in transmitter release at synapses formed between cultured sympathetic ganglion cells. Critical participant in signaling sequences that result in fibroblast apoptosis. Plays a role in the regulation of epithelial cell survival. Required for epithelial wound healing, especially during actomyosin ring contraction during purse-string wound closure. Mediates RhoA-dependent membrane blebbing. Triggers TRPC5 channel activity in a calcium-dependent signaling, by inducing its subcellular localization at the plasma membrane. Promotes cell migration (including tumor cells) and tumor metastasis. PTK2B/PYK2 activation by phosphorylation mediates ITGB2 activation and is thus essential to trigger neutrophil transmigration during acute lung injury (ALI). May regulate optic nerve head astrocyte migration. Probably involved in mitotic cytoskeletal regulation. Regulates tight junction probably by modulating ZO-1 exchange in the perijunctional actomyosin ring. Mediates burn-induced microvascular barrier injury; triggers endothelial contraction in the development of microvascular hyperpermeability by phosphorylating MLC. Essential for intestinal barrier dysfunction. Mediates Giardia spp.-mediated reduced epithelial barrier function during giardiasis intestinal infection via reorganization of cytoskeletal F-actin and tight junctional ZO-1. Necessary for hypotonicity-induced Ca(2+) entry and subsequent activation of volume-sensitive organic osmolyte/anion channels (VSOAC) in cervical cancer cells. The chain is Myosin light chain kinase, smooth muscle (MYLK) from Bos taurus (Bovine).